A 635-amino-acid chain; its full sequence is Cerevisin (635 aa).

The first 19 residues, 1–19 (MKLENTLFTLGALGSISAA), serve as a signal peptide directing secretion. A propeptide spanning residues 20-280 (LVIPNLENAA…VERDSIVEAT (261 aa)) is cleaved from the precursor. Composition is skewed to basic and acidic residues over residues 35–50 (INKEDHHERPRKVEFT), 74–85 (KGQDKESPEFNG), 94–109 (SAHEGGKGMKPKHESS), and 126–136 (GCHENKVEEKK). Residues 35-155 (INKEDHHERP…KHHEKTLEKG (121 aa)) are disordered. The span at 137 to 155 (MKGKKVKGKKHHEKTLEKG) shows a compositional bias: basic residues. In terms of domain architecture, Inhibitor I9 spans 182–278 (RYIIVFKRGA…DFVERDSIVE (97 aa)). A Peptidase S8 domain is found at 289–614 (PWGLARISHR…KQELNMDEFI (326 aa)). Catalysis depends on charge relay system residues aspartate 325 and histidine 357. Cysteine 460 and cysteine 491 form a disulfide bridge. The Charge relay system role is filled by serine 519. The propeptide occupies 575 to 635 (DTPNVLIYNG…RDILDKLNII (61 aa)). Asparagine 594 carries N-linked (GlcNAc...) asparagine glycosylation.

The protein belongs to the peptidase S8 family. Activated by N- and C-terminal proteolytic cleavage. Protease B (PrB/PRB1) processing requires at least 4 cleavages. First, the signal peptide is removed from the 76 kDa preproprotease B by signal peptidase in the ER. Then, PrB removes its own Pro-region (in trans) at the N-terminus, producing a 39 kDa form before exiting the ER. In the Golgi complex, the C-terminal Post-region of the 40 kDa proprotease B undergoes protease A (PrA/PEP4)-mediated processing to a 37 kDa intermediate, which in turn is quickly processed again by PrB in trans to yield the 31 kDa mature PrB. In terms of processing, glycosylated. Preproprotease B is a 76 kDa unglycosylated precursor that enters the endoplasmic reticulum (ER), where it receives one Asn-linked and an undetermined number of non-Asn-linked carbohydrate side chains. In the Golgi complex, the 39 kDa form becomes 40 kDa, due to elaboration of the Asn-linked side chain. The ultimate processing step removes a peptide containing the Asn-linked chain. Mature PrB has only non-Asn-linked carbohydrates.

The protein resides in the vacuole. The enzyme catalyses Hydrolysis of proteins with broad specificity, and of Bz-Arg-OEt &gt; Ac-Tyr-OEt. Does not hydrolyze peptide amides.. Functionally, vacuolar proteinase B involved in protein degradation in the vacuole. Among other substrates, acts on carboxypeptidase Y (cpY/PRC1) to activate it by processing its Pro-peptide. Required for meiosis and spore formation, and for optimal survival in stationary phase. This chain is Cerevisin (PRB1), found in Saccharomyces cerevisiae (strain ATCC 204508 / S288c) (Baker's yeast).